We begin with the raw amino-acid sequence, 377 residues long: Cell division protein FtsZ (377 aa).

The span at 1-16 (MDSIVDDAIDEAEDMG) shows a compositional bias: acidic residues. The interval 1 to 33 (MDSIVDDAIDEAEDMGDGSAEVGGPTDINRSGT) is disordered. Residues 57–61 (GAGGN), 144–146 (GTG), E175, R179, and D222 each bind GTP.

It belongs to the FtsZ family. As to quaternary structure, homodimer. Polymerizes to form a dynamic ring structure in a strictly GTP-dependent manner. Interacts directly with several other division proteins.

It is found in the cytoplasm. Functionally, essential cell division protein that forms a contractile ring structure (Z ring) at the future cell division site. The regulation of the ring assembly controls the timing and the location of cell division. One of the functions of the FtsZ ring is to recruit other cell division proteins to the septum to produce a new cell wall between the dividing cells. Binds GTP and shows GTPase activity. This Haloferax mediterranei (strain ATCC 33500 / DSM 1411 / JCM 8866 / NBRC 14739 / NCIMB 2177 / R-4) (Halobacterium mediterranei) protein is Cell division protein FtsZ.